The sequence spans 394 residues: 1-deoxy-D-xylulose 5-phosphate reductoisomerase (394 aa).

Thr12, Gly13, Ser14, Ile15, Gly38, Asn41, and Asn132 together coordinate NADPH. A 1-deoxy-D-xylulose 5-phosphate-binding site is contributed by Lys133. Residue Glu134 coordinates NADPH. Asp156 contributes to the Mn(2+) binding site. 1-deoxy-D-xylulose 5-phosphate contacts are provided by Ser157, Glu158, Ser182, and His205. Glu158 is a binding site for Mn(2+). Gly211 contributes to the NADPH binding site. 4 residues coordinate 1-deoxy-D-xylulose 5-phosphate: Ser218, Asn223, Lys224, and Glu227. Residue Glu227 participates in Mn(2+) binding.

It belongs to the DXR family. Mg(2+) serves as cofactor. Mn(2+) is required as a cofactor.

It catalyses the reaction 2-C-methyl-D-erythritol 4-phosphate + NADP(+) = 1-deoxy-D-xylulose 5-phosphate + NADPH + H(+). It participates in isoprenoid biosynthesis; isopentenyl diphosphate biosynthesis via DXP pathway; isopentenyl diphosphate from 1-deoxy-D-xylulose 5-phosphate: step 1/6. Its function is as follows. Catalyzes the NADPH-dependent rearrangement and reduction of 1-deoxy-D-xylulose-5-phosphate (DXP) to 2-C-methyl-D-erythritol 4-phosphate (MEP). This is 1-deoxy-D-xylulose 5-phosphate reductoisomerase from Arthrobacter sp. (strain FB24).